The sequence spans 364 residues: ERCC4 domain-containing protein EP364R (364 aa).

One can recognise an ERCC4 domain in the interval 3 to 102 (FLVADHREHH…QLYFFVEGPA (100 aa)). The span at 319–328 (ASRPATQPAA) shows a compositional bias: polar residues. Residues 319-352 (ASRPATQPAATQPLHEVSDDATSNASDTSSPIGH) form a disordered region. The segment covering 338–348 (DATSNASDTSS) has biased composition (low complexity).

It belongs to the asfivirus EP364R family.

Functionally, plays a role in the inhibition of type I interferon signaling pathway. Mechanistically, specifically interacts with 2',3'-cGAMP and cleaves it via its phosphodiesterase activity. In turn, prevents 2',3'-cGAMP interaction with host ER-resident STING1 leading to inhibition of downstream signaling pathway and type I interferon production. In African swine fever virus (strain Badajoz 1971 Vero-adapted) (Ba71V), this protein is ERCC4 domain-containing protein EP364R.